Here is a 158-residue protein sequence, read N- to C-terminus: uncharacterized protein (158 aa).

Residues 12-73 (LDEIDRAILR…LINPFKAGYE (62 aa)) enclose the HTH asnC-type domain. The segment at residues 31-50 (YSEISRRINVPESTVRARVN) is a DNA-binding region (H-T-H motif).

This is an uncharacterized protein from Pyrococcus abyssi (strain GE5 / Orsay).